The chain runs to 585 residues: Proline--tRNA ligase (585 aa).

This sequence belongs to the class-II aminoacyl-tRNA synthetase family. ProS type 1 subfamily. As to quaternary structure, homodimer.

It localises to the cytoplasm. The catalysed reaction is tRNA(Pro) + L-proline + ATP = L-prolyl-tRNA(Pro) + AMP + diphosphate. Its function is as follows. Catalyzes the attachment of proline to tRNA(Pro) in a two-step reaction: proline is first activated by ATP to form Pro-AMP and then transferred to the acceptor end of tRNA(Pro). As ProRS can inadvertently accommodate and process non-cognate amino acids such as alanine and cysteine, to avoid such errors it has two additional distinct editing activities against alanine. One activity is designated as 'pretransfer' editing and involves the tRNA(Pro)-independent hydrolysis of activated Ala-AMP. The other activity is designated 'posttransfer' editing and involves deacylation of mischarged Ala-tRNA(Pro). The misacylated Cys-tRNA(Pro) is not edited by ProRS. This is Proline--tRNA ligase from Acidobacterium capsulatum (strain ATCC 51196 / DSM 11244 / BCRC 80197 / JCM 7670 / NBRC 15755 / NCIMB 13165 / 161).